The sequence spans 474 residues: JmjC domain-containing protein F (474 aa).

Positions 247-269 (KTKKQQQQQQTTTTTANNDNDNS) are disordered. Over residues 251 to 261 (QQQQQQTTTTT) the composition is skewed to low complexity. The JmjC domain occupies 305–474 (AYLAQHGLIE…LSLSFWFIKK (170 aa)).

In Dictyostelium discoideum (Social amoeba), this protein is JmjC domain-containing protein F (jcdF).